The sequence spans 145 residues: Immunoglobulin iota chain (145 aa).

The signal sequence occupies residues 1–19 (MSWAPVLLMLFVYCTGCGP). The tract at residues 20 to 41 (QPVLHQPPAMSSALGTTIRLTC) is framework-1. One can recognise an Ig-like V-type domain in the interval 20–132 (QPVLHQPPAM…EKEEREREWE (113 aa)). An intrachain disulfide couples Cys41 to Cys115. Residues 42-56 (TLRNDHDIGVYSVYW) form a complementarity-determining-1 region. Positions 57–70 (YQQRPGHPPRFLLR) are framework-2. Residues 71 to 81 (YFSQSDKSQGP) form a complementarity-determining-2 region. The interval 82–115 (QVPPRFSGSKDVARNRGYLSISELQPEDEAMYYC) is framework-3. Residues 121 to 130 (SSEKEERERE) show a composition bias toward basic and acidic residues. The disordered stretch occupies residues 121–145 (SSEKEEREREWEEEMEPTAARTRVP).

It belongs to the immunoglobulin superfamily. Interacts with IGLL1. Interacts with SYNV1/HRD1 (via N-terminus); this interaction leads to increased VPREB1 ubiquitination and degradation in pre-B cells, possibly through a lysosomal, not proteasomal, pathway. In terms of tissue distribution, only expressed by pre-B-cells.

The protein resides in the endoplasmic reticulum. Its function is as follows. Associates with the Ig-mu chain to form a molecular complex that is expressed on the surface of pre-B-cells. This complex presumably regulates Ig gene rearrangements in the early steps of B-cell differentiation. The sequence is that of Immunoglobulin iota chain (VPREB1) from Homo sapiens (Human).